The following is a 188-amino-acid chain: Peptidyl-tRNA hydrolase (188 aa).

Tyr14 contacts tRNA. His19 acts as the Proton acceptor in catalysis. Residues Tyr64, Asn66, and Asn112 each coordinate tRNA.

It belongs to the PTH family. Monomer.

Its subcellular location is the cytoplasm. The enzyme catalyses an N-acyl-L-alpha-aminoacyl-tRNA + H2O = an N-acyl-L-amino acid + a tRNA + H(+). Functionally, hydrolyzes ribosome-free peptidyl-tRNAs (with 1 or more amino acids incorporated), which drop off the ribosome during protein synthesis, or as a result of ribosome stalling. In terms of biological role, catalyzes the release of premature peptidyl moieties from peptidyl-tRNA molecules trapped in stalled 50S ribosomal subunits, and thus maintains levels of free tRNAs and 50S ribosomes. The protein is Peptidyl-tRNA hydrolase of Bacillus velezensis (strain DSM 23117 / BGSC 10A6 / LMG 26770 / FZB42) (Bacillus amyloliquefaciens subsp. plantarum).